A 424-amino-acid polypeptide reads, in one-letter code: Riboflavin biosynthesis protein RibBA (424 aa).

The tract at residues 1–204 (MTRFDSIERA…IADLIAWRRK (204 aa)) is DHBP synthase. Residues 28–29 (RE), Asp-33, 141–145 (RPGHT), and Glu-165 contribute to the D-ribulose 5-phosphate site. Glu-29 serves as a coordination point for Mg(2+). Mg(2+) is bound at residue His-144. The segment at 205-424 (HEKHVLRIAE…QNTAQPGTAL (220 aa)) is GTP cyclohydrolase II. 259-263 (RVHSE) contacts GTP. Zn(2+)-binding residues include Cys-264, Cys-275, and Cys-277. Residues Gln-280, 303-305 (EGR), and Thr-325 each bind GTP. The Proton acceptor; for GTP cyclohydrolase activity role is filled by Asp-337. The active-site Nucleophile; for GTP cyclohydrolase activity is the Arg-339. Thr-360 and Lys-365 together coordinate GTP.

This sequence in the N-terminal section; belongs to the DHBP synthase family. In the C-terminal section; belongs to the GTP cyclohydrolase II family. Mg(2+) is required as a cofactor. Mn(2+) serves as cofactor. Requires Zn(2+) as cofactor.

It catalyses the reaction D-ribulose 5-phosphate = (2S)-2-hydroxy-3-oxobutyl phosphate + formate + H(+). It carries out the reaction GTP + 4 H2O = 2,5-diamino-6-hydroxy-4-(5-phosphoribosylamino)-pyrimidine + formate + 2 phosphate + 3 H(+). The protein operates within cofactor biosynthesis; riboflavin biosynthesis; 2-hydroxy-3-oxobutyl phosphate from D-ribulose 5-phosphate: step 1/1. It functions in the pathway cofactor biosynthesis; riboflavin biosynthesis; 5-amino-6-(D-ribitylamino)uracil from GTP: step 1/4. Functionally, catalyzes the conversion of D-ribulose 5-phosphate to formate and 3,4-dihydroxy-2-butanone 4-phosphate. Catalyzes the conversion of GTP to 2,5-diamino-6-ribosylamino-4(3H)-pyrimidinone 5'-phosphate (DARP), formate and pyrophosphate. The polypeptide is Riboflavin biosynthesis protein RibBA (Rhodococcus erythropolis (strain PR4 / NBRC 100887)).